We begin with the raw amino-acid sequence, 639 residues long: Zinc finger protein ZIC 5 (639 aa).

Disordered regions lie at residues 113–171, 189–251, 323–355, and 379–409; these read PCGG…GHSR, HGAP…GHPH, PGPHLQHHAPPPAPPPPPAPAQHPHQHHPHLPG, and PDELAGLPPPPPPPPPPPPPPPAGGAKPCSK. The span at 124–150 shows a compositional bias: pro residues; sequence SAPPPPAPPLPPTPSPPPPPPPPPPPA. Pro residues-rich tracts occupy residues 331-343 and 385-401; these read APPPAPPPPPAPA and LPPPPPPPPPPPPPPPA. The segment at 434–461 adopts a C2H2-type 1; atypical zinc-finger fold; the sequence is HVCFWEDCPREGKPFKAKYKLINHIRVH. 3 consecutive C2H2-type zinc fingers follow at residues 467-491, 497-521, and 527-551; these read FPCPFPGCGKVFARSENLKIHKRTH, FKCEFDGCDRKFANSSDRKKHSHVH, and YYCKIRGCDKSYTHPSSLRKHMKIH. The segment at 548-568 is disordered; the sequence is MKIHCKSPPPSPGPLGYSSVG. A phosphoserine mark is found at S554, S558, and S576. The tract at residues 607 to 639 is disordered; it reads APSHLHTPSSNGTTSETEDEEIYGNPEVVRTIH. Residues 612–621 show a composition bias toward polar residues; sequence HTPSSNGTTS.

This sequence belongs to the GLI C2H2-type zinc-finger protein family.

Its subcellular location is the nucleus. Its function is as follows. Essential for neural crest development, converting cells from an epidermal fate to a neural crest cell fate. Binds to DNA. The polypeptide is Zinc finger protein ZIC 5 (ZIC5) (Homo sapiens (Human)).